A 461-amino-acid chain; its full sequence is UDP-glucosyltransferase 1 (461 aa).

This sequence belongs to the UDP-glycosyltransferase family.

It participates in secondary metabolite biosynthesis. Its function is as follows. UDP-glucosyltransferase; part of the pathway that mediates the biosynthesis of tenellin-type 2-pyridones, iron-chelating compounds involved in iron stress tolerance, competition with the natural competitor fungus Metarhizium robertsii and insect hosts infection. Targets the N-OH hydroxyl residue of 15-hydroxytellenin (15-HT) to produce pyridovericin-N-O-(beta-D-glucopyranoside) which is further methylated by the methyltransferase MT1 to yield pyridovericin-N-O-(4-O-methyl-beta-D-glucopyranoside) (PMGP). The pathway begins with the assembly of the polyketide-amino acid backbone by the hybrid PKS-NRPS tenS with the help of the enoyl reductase tenC. These enzymes catalyze the synthesis of the pyrrolidine-2-dione intermediates pretellinin A, 11-hydropretellenin A, 12-hydropretellenin A, 13-hydropretellenin A, 14-hydropretellenin A, 12-oxopretellenin A and prototellinin D. The cytochrome P450 monooxygenase tenA then catalyzes an oxidative ring expansion of pretenellin A and 14-hydropretellenin A to form the 2-pyridone core, leading to pretenellin B and pyridovericin, respectively. The cytochrome P450 monooxygenase tenB is then required for the selective N-hydroxylation of the 2-pyridone nitrogen of yield tellinin and 15-hydroxytellenin (15-HT), respectively. The UDP-glucosyltransferase GT1 and the methyltransferase MT1, located outside the tenS gene cluster, contribute to the stepwise glycosylation and methylation of 15-HT to obtain the glycoside pyridovericin-N-O-(4-O-methyl-beta-D-glucopyranoside) (PMGP). Additional related compounds such as 1-O-methyl-15-HT, (8Z)-1-O-methyl-15-HT, and O-methyltenellin A are also produced but the enzymes involved in their biosynthesis have still to be determined. This is UDP-glucosyltransferase 1 from Beauveria bassiana (strain ARSEF 2860) (White muscardine disease fungus).